Here is a 302-residue protein sequence, read N- to C-terminus: MSNALYQSSINSLPLLGHGKVRDNYAVGNDKLLIVTTDRLSAFDVIMGEPIPDKGRVLNQMANFWFRKLAHIVPNHETGIAPETVVAPEEVEQVKGRAVVVKRLRPILVEAVVRGYLAGSGWKDYQATGKVCGIELPAGLQNAQKLPEPIFTPAAKAEMGEHDENISFAEVEARIGIALARQMRDISIRLYKEAAEFAATRGIIIADTKFEFGLDDNGVLTLMDEVLTADSSRFWPADSYQVGTNPPSFDKQFVRDWLEAVRIDGKPWPKTAPAPQLPDEVIEKTAAKYREALTRLTGEELQ.

It belongs to the SAICAR synthetase family.

The enzyme catalyses 5-amino-1-(5-phospho-D-ribosyl)imidazole-4-carboxylate + L-aspartate + ATP = (2S)-2-[5-amino-1-(5-phospho-beta-D-ribosyl)imidazole-4-carboxamido]succinate + ADP + phosphate + 2 H(+). Its pathway is purine metabolism; IMP biosynthesis via de novo pathway; 5-amino-1-(5-phospho-D-ribosyl)imidazole-4-carboxamide from 5-amino-1-(5-phospho-D-ribosyl)imidazole-4-carboxylate: step 1/2. The protein is Phosphoribosylaminoimidazole-succinocarboxamide synthase of Cupriavidus necator (strain ATCC 17699 / DSM 428 / KCTC 22496 / NCIMB 10442 / H16 / Stanier 337) (Ralstonia eutropha).